The following is a 1435-amino-acid chain: Putative ATP-dependent RNA helicase YLR419W (1435 aa).

Disordered regions lie at residues 1-57 (MAKK…STAS) and 226-251 (LSSHGGISSSGKDRQERKVASHKNSH). Ser9 carries the post-translational modification Phosphoserine. The segment covering 31–43 (KGQEPEPEDDKRA) has biased composition (basic and acidic residues). A compositionally biased stretch (polar residues) spans 45 to 57 (QQSNRAKVTSTAS). Residues 365-406 (PLSTRMIVERLTEIGVSSDEALLALQQNDMNENEAAGFLTRE) enclose the UBA domain. The 102-residue stretch at 430–531 (QELESLESIY…EWLKENISKI (102 aa)) folds into the RWD domain. The tract at residues 543-566 (DSKGAINKRNISNGKRSINNSSSR) is disordered. Positions 551–566 (RNISNGKRSINNSSSR) are enriched in polar residues. Residues 614–782 (IDIINKNEVV…FPGLATCHIE (169 aa)) enclose the Helicase ATP-binding domain. 627 to 634 (GETGSGKS) contacts ATP. Residues 729-732 (DEVH) carry the DEAH box motif. A Phosphoserine modification is found at Ser816. Positions 845-1020 (LLCQVVEYVH…SLYLSVKAMG (176 aa)) constitute a Helicase C-terminal domain.

This sequence belongs to the DEAD box helicase family. DEAH subfamily.

It is found in the cytoplasm. It carries out the reaction ATP + H2O = ADP + phosphate + H(+). Functionally, probable ATP-binding RNA helicase. The polypeptide is Putative ATP-dependent RNA helicase YLR419W (Saccharomyces cerevisiae (strain ATCC 204508 / S288c) (Baker's yeast)).